Consider the following 228-residue polypeptide: MNYNPFQWTFKSEQTANEFNEHVEKSVPFYKEIHKIVKIIGGFFVEENTNVYDIGSSTGNLLKGMSNILKRNANYIGIDNSIYMNQVAMNDADSDNIKIISEDVQDFKFTNASYITSILTLQFINIEDREKTIKNVYQGLNKGGAFILVEKVNGEFVQSHEIMNQIYHDFKLENGLTYEEVIKKSQSIRGVLKPLTLKQNKRMLEKAGFKDIDTWFKWNNFVGIIAVK.

Residues tyrosine 30, 55–57 (GSS), 79–80 (DN), and 103–104 (DV) each bind S-adenosyl-L-methionine.

Belongs to the class I-like SAM-binding methyltransferase superfamily. Cx-SAM synthase family.

It carries out the reaction prephenate + S-adenosyl-L-methionine = carboxy-S-adenosyl-L-methionine + 3-phenylpyruvate + H2O. Functionally, catalyzes the conversion of S-adenosyl-L-methionine (SAM) to carboxy-S-adenosyl-L-methionine (Cx-SAM). This chain is Carboxy-S-adenosyl-L-methionine synthase, found in Staphylococcus epidermidis (strain ATCC 35984 / DSM 28319 / BCRC 17069 / CCUG 31568 / BM 3577 / RP62A).